A 325-amino-acid polypeptide reads, in one-letter code: dITP/XTP pyrophosphatase (325 aa).

The tract at residues 1–128 (MKEKIYEYKD…KKVSELGDTI (128 aa)) is unknown. An NTP pyrophosphatase region spans residues 129 to 324 (LIATRNEGKT…MEVFPAWQNA (196 aa)). A substrate-binding site is contributed by 132-137 (TRNEGK). Mg(2+)-binding residues include Glu165 and Asp194. Asp194 acts as the Proton acceptor in catalysis. Substrate is bound by residues Ser195, 278–281 (FGYD), Lys301, and 306–307 (HR).

This sequence belongs to the HAM1 NTPase family. In terms of assembly, homodimer. Requires Mg(2+) as cofactor.

It catalyses the reaction XTP + H2O = XMP + diphosphate + H(+). It carries out the reaction dITP + H2O = dIMP + diphosphate + H(+). The enzyme catalyses ITP + H2O = IMP + diphosphate + H(+). Functionally, pyrophosphatase that catalyzes the hydrolysis of nucleoside triphosphates to their monophosphate derivatives, with a high preference for the non-canonical purine nucleotides XTP (xanthosine triphosphate), dITP (deoxyinosine triphosphate) and ITP. Seems to function as a house-cleaning enzyme that removes non-canonical purine nucleotides from the nucleotide pool, thus preventing their incorporation into DNA/RNA and avoiding chromosomal lesions. This Streptococcus mutans serotype c (strain ATCC 700610 / UA159) protein is dITP/XTP pyrophosphatase.